A 517-amino-acid chain; its full sequence is DNA primase DnaG (517 aa).

The 87-residue stretch at 171-257 (DAIIILEGRA…CVEDLVQKEV (87 aa)) folds into the Toprim domain. Mg(2+)-binding residues include glutamate 177, aspartate 219, and aspartate 221.

This sequence belongs to the archaeal DnaG primase family. As to quaternary structure, forms a ternary complex with MCM helicase and DNA. Component of the archaeal exosome complex. Mg(2+) serves as cofactor.

The catalysed reaction is ssDNA + n NTP = ssDNA/pppN(pN)n-1 hybrid + (n-1) diphosphate.. RNA polymerase that catalyzes the synthesis of short RNA molecules used as primers for DNA polymerase during DNA replication. Also part of the exosome, which is a complex involved in RNA degradation. Acts as a poly(A)-binding protein that enhances the interaction between heteromeric, adenine-rich transcripts and the exosome. The chain is DNA primase DnaG from Methanosarcina barkeri (strain Fusaro / DSM 804).